The primary structure comprises 188 residues: GTP cyclohydrolase 1 (188 aa).

3 residues coordinate Zn(2+): C76, H79, and C148.

It belongs to the GTP cyclohydrolase I family. In terms of assembly, homomer.

The enzyme catalyses GTP + H2O = 7,8-dihydroneopterin 3'-triphosphate + formate + H(+). It participates in cofactor biosynthesis; 7,8-dihydroneopterin triphosphate biosynthesis; 7,8-dihydroneopterin triphosphate from GTP: step 1/1. This is GTP cyclohydrolase 1 from Thermoanaerobacter pseudethanolicus (strain ATCC 33223 / 39E) (Clostridium thermohydrosulfuricum).